Consider the following 1034-residue polypeptide: Enteropeptidase (1034 aa).

A propeptide spanning residues 1–51 (MGSKRIIPSRHRSLSTYEVMFTALFAILMVLCAGLIAVSWLTIKGSEKDAA) is cleaved from the precursor. At 2–18 (GSKRIIPSRHRSLSTYE) the chain is on the cytoplasmic side. A helical; Signal-anchor for type II membrane protein membrane pass occupies residues 19 to 47 (VMFTALFAILMVLCAGLIAVSWLTIKGSE). Residues 48-1034 (KDAALGKSHE…FTEWIQSFLH (987 aa)) lie on the Extracellular side of the membrane. One can recognise an SEA domain in the interval 54–169 (KSHEARGTMK…NSIDITESLE (116 aa)). 4 N-linked (GlcNAc...) asparagine glycosylation sites follow: N116, N147, N170, and N194. The region spanning 197-238 (IECLPGSRPCADALKCIAVDLFCDGELNCPDGSDEDSKICAT) is the LDL-receptor class A 1 domain. 4 cysteine pairs are disulfide-bonded: C199/C212, C206/C225, C219/C236, and C240/C268. In terms of domain architecture, CUB 1 spans 240–349 (CDGKFLLTES…IGFNATYTAF (110 aa)). N-linked (GlcNAc...) asparagine glycosylation is found at N283, N343, N350, N403, N455, N485, N518, N549, and N645. Residues 357-519 (DEKINCNFED…ISLTYGICNV (163 aa)) enclose the MAM domain. Cysteines 539 and 567 form a disulfide. Residues 539–649 (CGGPFELWEP…GGFKANFTTG (111 aa)) enclose the CUB 2 domain. The region spanning 656–694 (EPCKEDNFQCENGECVLLVNLCDGFSHCKDGSDEAHCVR) is the LDL-receptor class A 2 domain. 3 disulfide bridges follow: C658/C670, C665/C683, and C677/C692. An SRCR domain is found at 693–786 (VRFLNGTANN…LILLQCNHKS (94 aa)). N697, N701, N721, N740, and N761 each carry an N-linked (GlcNAc...) asparagine glycan. Disulfide bonds link C772/C782, C787/C911, C825/C841, C925/C992, C956/C971, and C982/C1010. In terms of domain architecture, Peptidase S1 spans 800-1034 (IVGGNDSREG…FTEWIQSFLH (235 aa)). An N-linked (GlcNAc...) asparagine glycan is attached at N804. H840 functions as the Charge relay system in the catalytic mechanism. N863 is a glycosylation site (N-linked (GlcNAc...) asparagine). Catalysis depends on D891, which acts as the Charge relay system. N-linked (GlcNAc...) asparagine glycosylation is found at N902 and N964. S986 acts as the Charge relay system in catalysis.

The protein belongs to the peptidase S1 family. As to quaternary structure, heterotrimer of a catalytic (light) chain, a multidomain (heavy) chain, and a mini chain. The chains are derived from a single precursor that is cleaved by a trypsin-like protease. In terms of processing, the mini chain may be cleaved by elastase.

Its subcellular location is the membrane. The catalysed reaction is Activation of trypsinogen by selective cleavage of 6-Lys-|-Ile-7 bond.. Functionally, responsible for initiating activation of pancreatic proteolytic proenzymes (trypsin, chymotrypsin and carboxypeptidase A). It catalyzes the conversion of trypsinogen to trypsin which in turn activates other proenzymes including chymotrypsinogen, procarboxypeptidases, and proelastases. This is Enteropeptidase (TMPRSS15) from Sus scrofa (Pig).